Here is a 475-residue protein sequence, read N- to C-terminus: Sulfate adenylyltransferase subunit 1 (475 aa).

The tr-type G domain occupies 25 to 239 (KSLLRFLTCG…EVLETVEIQR (215 aa)). A G1 region spans residues 34 to 41 (GSVDDGKS). Residue 34-41 (GSVDDGKS) participates in GTP binding. The interval 92-96 (GITID) is G2. Positions 113-116 (DTPG) are G3. Residues 113-117 (DTPGH) and 168-171 (NKMD) contribute to the GTP site. The tract at residues 168 to 171 (NKMD) is G4. Residues 206-208 (SAL) are G5.

Belongs to the TRAFAC class translation factor GTPase superfamily. Classic translation factor GTPase family. CysN/NodQ subfamily. Heterodimer composed of CysD, the smaller subunit, and CysN.

It catalyses the reaction sulfate + ATP + H(+) = adenosine 5'-phosphosulfate + diphosphate. The protein operates within sulfur metabolism; hydrogen sulfide biosynthesis; sulfite from sulfate: step 1/3. Functionally, with CysD forms the ATP sulfurylase (ATPS) that catalyzes the adenylation of sulfate producing adenosine 5'-phosphosulfate (APS) and diphosphate, the first enzymatic step in sulfur assimilation pathway. APS synthesis involves the formation of a high-energy phosphoric-sulfuric acid anhydride bond driven by GTP hydrolysis by CysN coupled to ATP hydrolysis by CysD. The protein is Sulfate adenylyltransferase subunit 1 of Escherichia coli (strain SE11).